The following is a 489-amino-acid chain: Inositol-pentakisphosphate 2-kinase (489 aa).

The EXKPK motif motif lies at 136 to 140; it reads EIKPK.

This sequence belongs to the IPK1 type 2 family.

The protein localises to the cytoplasm. It is found in the nucleus. The catalysed reaction is 1D-myo-inositol 1,3,4,5,6-pentakisphosphate + ATP = 1D-myo-inositol hexakisphosphate + ADP + H(+). In terms of biological role, phosphorylates Ins(1,3,4,5,6)P5 at position 2 to form Ins(1,2,3,4,5,6)P6 (InsP6 or phytate). InsP6 is involved in many processes such as mRNA export, non-homologous end-joining, endocytosis, ion channel regulation. It also protects cells from TNF-alpha-induced apoptosis. This chain is Inositol-pentakisphosphate 2-kinase (Ippk), found in Rattus norvegicus (Rat).